The following is a 277-amino-acid chain: ATP synthase subunit delta (277 aa).

Belongs to the ATPase delta chain family. In terms of assembly, F-type ATPases have 2 components, F(1) - the catalytic core - and F(0) - the membrane proton channel. F(1) has five subunits: alpha(3), beta(3), gamma(1), delta(1), epsilon(1). F(0) has three main subunits: a(1), b(2) and c(10-14). The alpha and beta chains form an alternating ring which encloses part of the gamma chain. F(1) is attached to F(0) by a central stalk formed by the gamma and epsilon chains, while a peripheral stalk is formed by the delta and b chains.

The protein resides in the cell membrane. In terms of biological role, f(1)F(0) ATP synthase produces ATP from ADP in the presence of a proton or sodium gradient. F-type ATPases consist of two structural domains, F(1) containing the extramembraneous catalytic core and F(0) containing the membrane proton channel, linked together by a central stalk and a peripheral stalk. During catalysis, ATP synthesis in the catalytic domain of F(1) is coupled via a rotary mechanism of the central stalk subunits to proton translocation. This protein is part of the stalk that links CF(0) to CF(1). It either transmits conformational changes from CF(0) to CF(1) or is implicated in proton conduction. The sequence is that of ATP synthase subunit delta from Frankia alni (strain DSM 45986 / CECT 9034 / ACN14a).